A 321-amino-acid polypeptide reads, in one-letter code: Ribose-phosphate pyrophosphokinase (321 aa).

ATP contacts are provided by residues 44 to 46 (DGE) and 103 to 104 (RQ). Positions 137 and 179 each coordinate Mg(2+). Residue lysine 202 is part of the active site. D-ribose 5-phosphate is bound by residues arginine 204, aspartate 228, and 232 to 236 (DTAGT).

The protein belongs to the ribose-phosphate pyrophosphokinase family. Class I subfamily. Homohexamer. The cofactor is Mg(2+).

It is found in the cytoplasm. The catalysed reaction is D-ribose 5-phosphate + ATP = 5-phospho-alpha-D-ribose 1-diphosphate + AMP + H(+). It functions in the pathway metabolic intermediate biosynthesis; 5-phospho-alpha-D-ribose 1-diphosphate biosynthesis; 5-phospho-alpha-D-ribose 1-diphosphate from D-ribose 5-phosphate (route I): step 1/1. Its function is as follows. Involved in the biosynthesis of the central metabolite phospho-alpha-D-ribosyl-1-pyrophosphate (PRPP) via the transfer of pyrophosphoryl group from ATP to 1-hydroxyl of ribose-5-phosphate (Rib-5-P). The sequence is that of Ribose-phosphate pyrophosphokinase from Staphylococcus saprophyticus subsp. saprophyticus (strain ATCC 15305 / DSM 20229 / NCIMB 8711 / NCTC 7292 / S-41).